A 136-amino-acid polypeptide reads, in one-letter code: Large ribosomal subunit protein uL3 (136 aa).

Residue Gln-83 is modified to N5-methylglutamine.

The protein belongs to the universal ribosomal protein uL3 family. In terms of assembly, part of the 50S ribosomal subunit. Forms a cluster with proteins L14 and L19. In terms of processing, methylated by PrmB.

One of the primary rRNA binding proteins, it binds directly near the 3'-end of the 23S rRNA, where it nucleates assembly of the 50S subunit. This chain is Large ribosomal subunit protein uL3 (rplC), found in Carsonella ruddii.